A 389-amino-acid chain; its full sequence is Flap endonuclease 1 (389 aa).

The interval methionine 1–arginine 105 is N-domain. Residue aspartate 34 participates in Mg(2+) binding. Residues arginine 47 and arginine 71 each contribute to the DNA site. Aspartate 87, glutamate 170, glutamate 172, aspartate 191, and aspartate 193 together coordinate Mg(2+). Residues aspartate 134 to histidine 265 form an I-domain region. A DNA-binding site is contributed by glutamate 170. 2 residues coordinate DNA: glycine 243 and aspartate 245. Aspartate 245 provides a ligand contact to Mg(2+). Residues proline 351 to phenylalanine 359 are interaction with PCNA. Residues lysine 360 to lysine 389 form a disordered region. The span at methionine 362–lysine 376 shows a compositional bias: basic and acidic residues. Residues threonine 377–lysine 389 are compositionally biased toward basic residues.

The protein belongs to the XPG/RAD2 endonuclease family. FEN1 subfamily. As to quaternary structure, interacts with PCNA. Three molecules of FEN1 bind to one PCNA trimer with each molecule binding to one PCNA monomer. PCNA stimulates the nuclease activity without altering cleavage specificity. Mg(2+) is required as a cofactor. Phosphorylated. Phosphorylation upon DNA damage induces relocalization to the nuclear plasma.

It localises to the nucleus. The protein resides in the nucleolus. It is found in the nucleoplasm. Its subcellular location is the mitochondrion. In terms of biological role, structure-specific nuclease with 5'-flap endonuclease and 5'-3' exonuclease activities involved in DNA replication and repair. During DNA replication, cleaves the 5'-overhanging flap structure that is generated by displacement synthesis when DNA polymerase encounters the 5'-end of a downstream Okazaki fragment. It enters the flap from the 5'-end and then tracks to cleave the flap base, leaving a nick for ligation. Also involved in the long patch base excision repair (LP-BER) pathway, by cleaving within the apurinic/apyrimidinic (AP) site-terminated flap. Acts as a genome stabilization factor that prevents flaps from equilibrating into structures that lead to duplications and deletions. Also possesses 5'-3' exonuclease activity on nicked or gapped double-stranded DNA, and exhibits RNase H activity. Also involved in replication and repair of rDNA and in repairing mitochondrial DNA. This is Flap endonuclease 1 from Yarrowia lipolytica (strain CLIB 122 / E 150) (Yeast).